We begin with the raw amino-acid sequence, 108 residues long: Large ribosomal subunit protein uL22 (108 aa).

Belongs to the universal ribosomal protein uL22 family. Part of the 50S ribosomal subunit.

In terms of biological role, this protein binds specifically to 23S rRNA; its binding is stimulated by other ribosomal proteins, e.g. L4, L17, and L20. It is important during the early stages of 50S assembly. It makes multiple contacts with different domains of the 23S rRNA in the assembled 50S subunit and ribosome. The globular domain of the protein is located near the polypeptide exit tunnel on the outside of the subunit, while an extended beta-hairpin is found that lines the wall of the exit tunnel in the center of the 70S ribosome. The sequence is that of Large ribosomal subunit protein uL22 from Nitratiruptor sp. (strain SB155-2).